The chain runs to 936 residues: Lipoxygenase 2.1, chloroplastic (936 aa).

Positions methionine 1–valine 69 are disordered. A compositionally biased stretch (low complexity) spans serine 47–threonine 59. One can recognise a PLAT domain in the interval methionine 88–proline 217. Positions serine 220–isoleucine 936 constitute a Lipoxygenase domain. The disordered stretch occupies residues leucine 264–histidine 308. Basic residues predominate over residues proline 287–serine 297. Over residues lysine 298–histidine 308 the composition is skewed to basic and acidic residues. Fe cation contacts are provided by histidine 587, histidine 592, histidine 777, asparagine 781, and isoleucine 936.

It belongs to the lipoxygenase family. Fe cation is required as a cofactor. In terms of processing, the N-terminus is blocked.

Its subcellular location is the plastid. The protein resides in the chloroplast. It carries out the reaction (9Z,12Z)-octadecadienoate + O2 = (13S)-hydroperoxy-(9Z,11E)-octadecadienoate. The catalysed reaction is (9Z,12Z,15Z)-octadecatrienoate + O2 = (13S)-hydroperoxy-(9Z,11E,15Z)-octadecatrienoate. It participates in lipid metabolism; oxylipin biosynthesis. Functionally, plant lipoxygenase may be involved in a number of diverse aspects of plant physiology including growth and development, pest resistance, and senescence or responses to wounding. This enzyme is possibly involved in jasmonic acid synthesis. It exhibits linoleate 13-lipoxygenase and arachidonate 15-lipoxygenase activity. The protein is Lipoxygenase 2.1, chloroplastic (LOX2.1) of Hordeum vulgare (Barley).